Reading from the N-terminus, the 84-residue chain is Small ribosomal subunit protein uS17 (84 aa).

It belongs to the universal ribosomal protein uS17 family. In terms of assembly, part of the 30S ribosomal subunit.

Its function is as follows. One of the primary rRNA binding proteins, it binds specifically to the 5'-end of 16S ribosomal RNA. The chain is Small ribosomal subunit protein uS17 from Clostridium botulinum (strain Okra / Type B1).